Consider the following 147-residue polypeptide: Deoxyuridine 5'-triphosphate nucleotidohydrolase (147 aa).

R24 serves as a coordination point for Mg(2+). DUTP contacts are provided by residues 68 to 70, 82 to 85, Y88, G93, I95, and R111; these read PRS and GVID.

It belongs to the dUTPase family.

It catalyses the reaction dUTP + H2O = dUMP + diphosphate + H(+). Its function is as follows. This enzyme is involved in nucleotide metabolism: it produces dUMP, the immediate precursor of thymidine nucleotides and it decreases the intracellular concentration of dUTP so that uracil cannot be incorporated into DNA. This Homo sapiens (Human) protein is Deoxyuridine 5'-triphosphate nucleotidohydrolase (OPG046).